Reading from the N-terminus, the 175-residue chain is Macro domain-containing protein TTE0995 (175 aa).

In terms of domain architecture, Macro spans 1-174; that stretch reads MKEKIKLIKG…VYSKAYEELD (174 aa).

Belongs to the MacroD-type family.

This chain is Macro domain-containing protein TTE0995, found in Caldanaerobacter subterraneus subsp. tengcongensis (strain DSM 15242 / JCM 11007 / NBRC 100824 / MB4) (Thermoanaerobacter tengcongensis).